A 165-amino-acid chain; its full sequence is Myosin regulatory light chain 2, ventricular/cardiac muscle isoform (165 aa).

Position 2 is a n,N,N-trimethylserine (Ser2). Asn14 bears the Deamidated asparagine mark. Phosphoserine occurs at positions 15 and 19. EF-hand domains are found at residues 24–59, 94–129, and 130–165; these read TQIQEFKEAFTIMDQNRDGFIDKNDLRDTFAALGRV, DPEETILNAFKVFDPEGKGVLKADYVREMLTTQAER, and FSKDEIDQMFAAFPPDVTGNLDYKNLVHIITHGEEK. Positions 37, 39, 41, and 48 each coordinate Ca(2+). At Thr52 the chain carries Phosphothreonine.

In terms of assembly, myosin is a hexamer of 2 heavy chains and 4 light chains. Interacts with MYOC. In terms of processing, N-terminus is methylated by METTL11A/NTM1. Post-translationally, phosphorylated by MYLK3 and MYLK2; promotes cardiac muscle contraction and function. Dephosphorylated by PPP1CB complexed to PPP1R12B. The phosphorylated form in adult is expressed as gradients across the heart from endocardium (low phosphorylation) to epicardium (high phosphorylation); regulates cardiac torsion and workload distribution.

Its subcellular location is the cytoplasm. It is found in the myofibril. The protein resides in the sarcomere. It localises to the a band. In terms of biological role, contractile protein that plays a role in heart development and function. Following phosphorylation, plays a role in cross-bridge cycling kinetics and cardiac muscle contraction by increasing myosin lever arm stiffness and promoting myosin head diffusion; as a consequence of the increase in maximum contraction force and calcium sensitivity of contraction force. These events altogether slow down myosin kinetics and prolong duty cycle resulting in accumulated myosins being cooperatively recruited to actin binding sites to sustain thin filament activation as a means to fine-tune myofilament calcium sensitivity to force. During cardiogenesis plays an early role in cardiac contractility by promoting cardiac myofibril assembly. This chain is Myosin regulatory light chain 2, ventricular/cardiac muscle isoform, found in Oryctolagus cuniculus (Rabbit).